The primary structure comprises 167 residues: Thioredoxin Y2, chloroplastic (167 aa).

A chloroplast-targeting transit peptide spans 1–58 (MAISLATAYISPCFTPESSNSASPSRTLSSVRLPSQIRRFGSVQSPSSSTRFAPLTVR). Positions 59-164 (AAKKQTFNSF…LVERIENSLQ (106 aa)) constitute a Thioredoxin domain. Active-site nucleophile residues include Cys88 and Cys91. A disulfide bridge connects residues Cys88 and Cys91.

This sequence belongs to the thioredoxin family. Plant Y-type subfamily. In terms of tissue distribution, expressed in leaves.

It is found in the plastid. It localises to the chloroplast stroma. Functionally, thiol-disulfide oxidoreductase that poorly activates chloroplastic malate dehydrogenase (NADP-MDH) and fructose-1,6-bisphosphatase. Provides reducing equivalents for peroxiredoxin Q. The protein is Thioredoxin Y2, chloroplastic of Arabidopsis thaliana (Mouse-ear cress).